We begin with the raw amino-acid sequence, 317 residues long: Methionyl-tRNA formyltransferase (317 aa).

A (6S)-5,6,7,8-tetrahydrofolate-binding site is contributed by 112–115; the sequence is SLLP.

It belongs to the Fmt family.

It carries out the reaction L-methionyl-tRNA(fMet) + (6R)-10-formyltetrahydrofolate = N-formyl-L-methionyl-tRNA(fMet) + (6S)-5,6,7,8-tetrahydrofolate + H(+). In terms of biological role, attaches a formyl group to the free amino group of methionyl-tRNA(fMet). The formyl group appears to play a dual role in the initiator identity of N-formylmethionyl-tRNA by promoting its recognition by IF2 and preventing the misappropriation of this tRNA by the elongation apparatus. The sequence is that of Methionyl-tRNA formyltransferase from Histophilus somni (strain 2336) (Haemophilus somnus).